We begin with the raw amino-acid sequence, 338 residues long: Glycerol-3-phosphate dehydrogenase [NAD(P)+] (338 aa).

NADPH-binding residues include Trp12, His33, and Lys110. Lys110, Gly142, and Ser144 together coordinate sn-glycerol 3-phosphate. Ala146 serves as a coordination point for NADPH. Positions 197, 250, 260, 261, and 262 each coordinate sn-glycerol 3-phosphate. Lys197 acts as the Proton acceptor in catalysis. Arg261 is an NADPH binding site. Positions 286 and 288 each coordinate NADPH.

This sequence belongs to the NAD-dependent glycerol-3-phosphate dehydrogenase family.

The protein resides in the cytoplasm. The enzyme catalyses sn-glycerol 3-phosphate + NAD(+) = dihydroxyacetone phosphate + NADH + H(+). It carries out the reaction sn-glycerol 3-phosphate + NADP(+) = dihydroxyacetone phosphate + NADPH + H(+). It functions in the pathway membrane lipid metabolism; glycerophospholipid metabolism. Catalyzes the reduction of the glycolytic intermediate dihydroxyacetone phosphate (DHAP) to sn-glycerol 3-phosphate (G3P), the key precursor for phospholipid synthesis. This chain is Glycerol-3-phosphate dehydrogenase [NAD(P)+], found in Acidobacterium capsulatum (strain ATCC 51196 / DSM 11244 / BCRC 80197 / JCM 7670 / NBRC 15755 / NCIMB 13165 / 161).